The chain runs to 125 residues: UPF0102 protein Mpop_0474 (125 aa).

It belongs to the UPF0102 family.

In Methylorubrum populi (strain ATCC BAA-705 / NCIMB 13946 / BJ001) (Methylobacterium populi), this protein is UPF0102 protein Mpop_0474.